A 164-amino-acid polypeptide reads, in one-letter code: Large ribosomal subunit protein uL10 (164 aa).

It belongs to the universal ribosomal protein uL10 family. As to quaternary structure, part of the ribosomal stalk of the 50S ribosomal subunit. The N-terminus interacts with L11 and the large rRNA to form the base of the stalk. The C-terminus forms an elongated spine to which L12 dimers bind in a sequential fashion forming a multimeric L10(L12)X complex.

Functionally, forms part of the ribosomal stalk, playing a central role in the interaction of the ribosome with GTP-bound translation factors. The chain is Large ribosomal subunit protein uL10 from Photobacterium profundum (strain SS9).